A 439-amino-acid polypeptide reads, in one-letter code: O-fucosyltransferase 13 (439 aa).

Residues 8 to 28 (PLFVFVLTFSLLLVVILLSPS) traverse the membrane as a helical; Signal-anchor for type II membrane protein segment. Asn104 and Asn119 each carry an N-linked (GlcNAc...) asparagine glycan. Position 238-240 (238-240 (HLR)) interacts with substrate. N-linked (GlcNAc...) asparagine glycosylation occurs at Asn293.

The protein belongs to the glycosyltransferase GT106 family.

Its subcellular location is the membrane. The protein operates within glycan metabolism. This Arabidopsis thaliana (Mouse-ear cress) protein is O-fucosyltransferase 13.